The chain runs to 105 residues: Large ribosomal subunit protein bL21c (105 aa).

Belongs to the bacterial ribosomal protein bL21 family. As to quaternary structure, part of the 50S ribosomal subunit.

Its subcellular location is the plastid. The protein resides in the chloroplast. In terms of biological role, this protein binds to 23S rRNA. In Phaeodactylum tricornutum (strain CCAP 1055/1), this protein is Large ribosomal subunit protein bL21c.